A 245-amino-acid chain; its full sequence is 14-3-3 protein zeta (245 aa).

It belongs to the 14-3-3 family. Homodimer. In terms of tissue distribution, present in all adult tissues examined with the highest levels in the brain.

The protein localises to the cytoplasm. Its function is as follows. Adapter protein implicated in the regulation of a large spectrum of both general and specialized signaling pathways. Binds to a large number of partners, usually by recognition of a phosphoserine or phosphothreonine motif. Binding generally results in the modulation of the activity of the binding partner. This is 14-3-3 protein zeta (ywhaz) from Xenopus laevis (African clawed frog).